The following is a 39-amino-acid chain: Cytochrome b559 subunit beta (39 aa).

Residues 14 to 30 (WLAVHGLAVPTVFFLGS) form a helical membrane-spanning segment. Position 18 (His-18) interacts with heme.

Belongs to the PsbE/PsbF family. Heterodimer of an alpha subunit and a beta subunit. PSII is composed of 1 copy each of membrane proteins PsbA, PsbB, PsbC, PsbD, PsbE, PsbF, PsbH, PsbI, PsbJ, PsbK, PsbL, PsbM, PsbT, PsbX, PsbY, PsbZ, Psb30/Ycf12, at least 3 peripheral proteins of the oxygen-evolving complex and a large number of cofactors. It forms dimeric complexes. Heme b is required as a cofactor.

It localises to the plastid. The protein localises to the chloroplast thylakoid membrane. Its function is as follows. This b-type cytochrome is tightly associated with the reaction center of photosystem II (PSII). PSII is a light-driven water:plastoquinone oxidoreductase that uses light energy to abstract electrons from H(2)O, generating O(2) and a proton gradient subsequently used for ATP formation. It consists of a core antenna complex that captures photons, and an electron transfer chain that converts photonic excitation into a charge separation. In Nicotiana glutinosa (Tobacco), this protein is Cytochrome b559 subunit beta.